A 449-amino-acid chain; its full sequence is 3-phosphoshikimate 1-carboxyvinyltransferase (449 aa).

Positions 1-26 (MNHHLPSRPARSRQSQGLKGNLRVPG) are disordered. 3 residues coordinate 3-phosphoshikimate: Lys28, Ser29, and Arg33. Phosphoenolpyruvate is bound at residue Lys28. Phosphoenolpyruvate is bound by residues Gly100 and Arg128. 3-phosphoshikimate-binding residues include Ser174, Gln176, Asp327, and Lys354. Gln176 provides a ligand contact to phosphoenolpyruvate. Catalysis depends on Asp327, which acts as the Proton acceptor. Arg358 and Arg403 together coordinate phosphoenolpyruvate.

It belongs to the EPSP synthase family. Monomer.

It localises to the cytoplasm. The enzyme catalyses 3-phosphoshikimate + phosphoenolpyruvate = 5-O-(1-carboxyvinyl)-3-phosphoshikimate + phosphate. The protein operates within metabolic intermediate biosynthesis; chorismate biosynthesis; chorismate from D-erythrose 4-phosphate and phosphoenolpyruvate: step 6/7. Catalyzes the transfer of the enolpyruvyl moiety of phosphoenolpyruvate (PEP) to the 5-hydroxyl of shikimate-3-phosphate (S3P) to produce enolpyruvyl shikimate-3-phosphate and inorganic phosphate. This is 3-phosphoshikimate 1-carboxyvinyltransferase from Chelativorans sp. (strain BNC1).